Consider the following 306-residue polypeptide: Shugoshin (306 aa).

A coiled-coil region spans residues 28-75; sequence NFKSTNESLIKKNLQLKQQLSQCTKALEKLRNENIALREQNQELIDAT. Disordered stretches follow at residues 122–196 and 223–306; these read PEPS…GRRS and IAPS…DTFF. Positions 133 to 161 are enriched in basic and acidic residues; the sequence is PKMECNLEKLDESPVRNFPRSDYEEENKS. Over residues 167–181 the composition is skewed to polar residues; it reads NGPSSSSSMTQNLEN. A compositionally biased stretch (pro residues) spans 230-241; it reads GGPPKKAPPRKA.

It belongs to the shugoshin family.

It is found in the nucleus. The protein resides in the chromosome. It localises to the centromere. In terms of biological role, plays a central role in chromosome cohesion during cell division by preventing premature dissociation of cohesin complex from centromeres after prophase, when most of cohesin complex dissociates from chromosomes arms. This is Shugoshin (sgo-1) from Caenorhabditis briggsae.